Here is a 133-residue protein sequence, read N- to C-terminus: Large ribosomal subunit protein bL19 (133 aa).

The protein belongs to the bacterial ribosomal protein bL19 family.

This protein is located at the 30S-50S ribosomal subunit interface and may play a role in the structure and function of the aminoacyl-tRNA binding site. This is Large ribosomal subunit protein bL19 from Stenotrophomonas maltophilia (strain R551-3).